The primary structure comprises 199 residues: MTEKEKMLAEKWYDANFDQDLINERARAKDICFELNHTKPSDTNKRKELIDQLFQTTTDNVSISIPFDTDYGWNVKLGKNVYVNTNCYFMDGGQITIGDNVFIGPNCGFYTATHPLNFYHRNEGYEKAGPIHIGSNTWFGGHVAVLPGVTIGEGSVIGAGSVVTKDIPPHSLAVGNPCKVVRKIDNDLPSETLNDETIK.

This sequence belongs to the transferase hexapeptide repeat family.

The sequence is that of Putative acetyltransferase SAV2555 from Staphylococcus aureus (strain Mu50 / ATCC 700699).